The primary structure comprises 252 residues: Fluoroquinolones export permease protein MT2760 (252 aa).

A run of 6 helical transmembrane segments spans residues 31–51 (VMLV…TPLF), 69–89 (LILT…LAAF), 119–139 (ATVM…SGIL), 148–168 (IPIG…ILAV), 176–196 (LAMV…PWFI), and 224–244 (TWWP…WVLF).

In terms of assembly, the complex is composed of 2 ATP-binding proteins and 2 transmembrane proteins.

The protein localises to the cell membrane. Part of the ABC transporter complex involved in fluoroquinolones export. Probably responsible for the translocation of the substrate across the membrane. The chain is Fluoroquinolones export permease protein MT2760 from Mycobacterium tuberculosis (strain CDC 1551 / Oshkosh).